We begin with the raw amino-acid sequence, 50 residues long: ATP synthase protein 8 (50 aa).

The helical transmembrane segment at 13–32 threads the bilayer; sequence ITFTFIILAITVYILSKYIL.

This sequence belongs to the ATPase protein 8 family. As to quaternary structure, F-type ATPases have 2 components, CF(1) - the catalytic core - and CF(0) - the membrane proton channel.

It is found in the mitochondrion membrane. Functionally, mitochondrial membrane ATP synthase (F(1)F(0) ATP synthase or Complex V) produces ATP from ADP in the presence of a proton gradient across the membrane which is generated by electron transport complexes of the respiratory chain. F-type ATPases consist of two structural domains, F(1) - containing the extramembraneous catalytic core and F(0) - containing the membrane proton channel, linked together by a central stalk and a peripheral stalk. During catalysis, ATP synthesis in the catalytic domain of F(1) is coupled via a rotary mechanism of the central stalk subunits to proton translocation. Part of the complex F(0) domain. Minor subunit located with subunit a in the membrane. This Podospora anserina (strain S / ATCC MYA-4624 / DSM 980 / FGSC 10383) (Pleurage anserina) protein is ATP synthase protein 8 (ATP8).